The primary structure comprises 319 residues: Glutathione synthetase (319 aa).

The ATP-grasp domain maps to 127–311 (KIFVTEFADL…VASLLWDAIE (185 aa)). An ATP-binding site is contributed by 153 to 209 (RNEMGDIILKPLYGNGGAGVFHSARDDRNFSSLLEMFGQMFREPYIAQEYLPDVRKG). Mg(2+)-binding residues include glutamate 282 and asparagine 284.

Belongs to the prokaryotic GSH synthase family. The cofactor is Mg(2+). Requires Mn(2+) as cofactor.

The catalysed reaction is gamma-L-glutamyl-L-cysteine + glycine + ATP = glutathione + ADP + phosphate + H(+). Its pathway is sulfur metabolism; glutathione biosynthesis; glutathione from L-cysteine and L-glutamate: step 2/2. The protein is Glutathione synthetase of Agrobacterium fabrum (strain C58 / ATCC 33970) (Agrobacterium tumefaciens (strain C58)).